We begin with the raw amino-acid sequence, 325 residues long: Tetraacyldisaccharide 4'-kinase (325 aa).

53–60 provides a ligand contact to ATP; that stretch reads SVGGNGKT.

The protein belongs to the LpxK family.

The catalysed reaction is a lipid A disaccharide + ATP = a lipid IVA + ADP + H(+). Its pathway is glycolipid biosynthesis; lipid IV(A) biosynthesis; lipid IV(A) from (3R)-3-hydroxytetradecanoyl-[acyl-carrier-protein] and UDP-N-acetyl-alpha-D-glucosamine: step 6/6. Transfers the gamma-phosphate of ATP to the 4'-position of a tetraacyldisaccharide 1-phosphate intermediate (termed DS-1-P) to form tetraacyldisaccharide 1,4'-bis-phosphate (lipid IVA). The polypeptide is Tetraacyldisaccharide 4'-kinase (Actinobacillus succinogenes (strain ATCC 55618 / DSM 22257 / CCUG 43843 / 130Z)).